The primary structure comprises 258 residues: MRVLCTNDDGVNAPGLKVIEEIADQLSDDVWIVAPELDQSGVSHSLSLNDPLRLREIGPRLFAVRGTPTDCVIMGSRHVLGDKQPNLVLSGVNKGRNVAEDVVYSGTIAGALEGTILGLPSFALSQEFGGPQNRDKPMWDVARAFGADVIRKVMSVGVPTDTVININFPACAPEEVKGVVVTRQGKRNQGFLRIDGHYDGRGNPYYWIGFEKFPVPDIPGEGTDLAALEGNYVSVTPLRLDRTDMRFSEQLANLFNTP.

A divalent metal cation contacts are provided by D8, D9, S40, and N93.

Belongs to the SurE nucleotidase family. A divalent metal cation is required as a cofactor.

It localises to the cytoplasm. It catalyses the reaction a ribonucleoside 5'-phosphate + H2O = a ribonucleoside + phosphate. In terms of biological role, nucleotidase that shows phosphatase activity on nucleoside 5'-monophosphates. The chain is 5'-nucleotidase SurE from Afipia carboxidovorans (strain ATCC 49405 / DSM 1227 / KCTC 32145 / OM5) (Oligotropha carboxidovorans).